The sequence spans 338 residues: Hydroxyproline O-galactosyltransferase HPGT1 (338 aa).

Residues 1-12 (MARKGSSIRLSS) lie on the Cytoplasmic side of the membrane. The helical; Signal-anchor for type II membrane protein transmembrane segment at 13–32 (SRISTLLLFMFATFASFYVA) threads the bilayer. Over 33 to 338 (GRLWQESQTR…WSSEAICAGV (306 aa)) the chain is Lumenal.

Belongs to the glycosyltransferase 31 family. Requires Mn(2+) as cofactor. As to expression, expressed in roots, rosette leaves, cauline leaves, stems, flowers and siliques.

Its subcellular location is the golgi apparatus membrane. Its pathway is protein modification; protein glycosylation. Functionally, possesses hydroxyproline O-galactosyltransferase activity. Transfers galactose from UDP-galactose to hydroxyproline residues in the arabinogalactan proteins (AGPs). Is specific for AGPs containing non-contiguous peptidyl hydroxyproline residues. The addition of galactose onto the peptidyl hydroxyproline residues in AGP core proteins represents the first committed step in arabinogalactan polysaccharide addition. AGP glycans play essential roles in both vegetative and reproductive plant growth. In Arabidopsis thaliana (Mouse-ear cress), this protein is Hydroxyproline O-galactosyltransferase HPGT1.